The chain runs to 1090 residues: Exoglucanase B (1090 aa).

An N-terminal signal peptide occupies residues 1 to 33 (MSSTTRRRSAWVAAATVGVSSFLAVAGITPAIA). Residues 34 to 53 (AAGAGQPATVTVPAASPVRA) constitute a propeptide that is removed on maturation. The tract at residues 54-699 (AVDGEYAQRF…RLFDDGTTTP (646 aa)) is catalytic. Catalysis depends on Asp513, which acts as the Nucleophile. Fibronectin type-III domains follow at residues 706–791 (VPTG…TKAT), 797–887 (APSV…TKSD), and 897–984 (VPAG…TKTP). Residues 983-1090 (TPQTGGSCSV…SFTLNGASCT (108 aa)) enclose the CBM2 domain. A disulfide bridge connects residues Cys990 and Cys1089. Residues 1069–1090 (NGSHTGQNPNPASFTLNGASCT) form a disordered region. Polar residues predominate over residues 1070 to 1090 (GSHTGQNPNPASFTLNGASCT).

The protein belongs to the glycosyl hydrolase 48 (cellulase L) family.

It catalyses the reaction Hydrolysis of (1-&gt;4)-beta-D-glucosidic linkages in cellulose and cellotetraose, releasing cellobiose from the non-reducing ends of the chains.. Its function is as follows. Hydrolyzes cellohexaose to a mixture of cellotetraose, cellotriose and cellobiose, with only a trace of glucose. It hydrolyzed cellopentaose to cellotriose and cellobiose, and cellotetraose to cellobiose, but it did not hydrolyze cellotriose. Also has weak endoglucanase activity. Hydrolyzes glucosidic bonds with inversion of anomeric configuration. In Cellulomonas fimi (strain ATCC 484 / DSM 20113 / JCM 1341 / CCUG 24087 / LMG 16345 / NBRC 15513 / NCIMB 8980 / NCTC 7547 / NRS-133), this protein is Exoglucanase B (cbhB).